The primary structure comprises 502 residues: Aspartyl/glutamyl-tRNA(Asn/Gln) amidotransferase subunit B (502 aa).

This sequence belongs to the GatB/GatE family. GatB subfamily. Heterotrimer of A, B and C subunits.

It catalyses the reaction L-glutamyl-tRNA(Gln) + L-glutamine + ATP + H2O = L-glutaminyl-tRNA(Gln) + L-glutamate + ADP + phosphate + H(+). The catalysed reaction is L-aspartyl-tRNA(Asn) + L-glutamine + ATP + H2O = L-asparaginyl-tRNA(Asn) + L-glutamate + ADP + phosphate + 2 H(+). Its function is as follows. Allows the formation of correctly charged Asn-tRNA(Asn) or Gln-tRNA(Gln) through the transamidation of misacylated Asp-tRNA(Asn) or Glu-tRNA(Gln) in organisms which lack either or both of asparaginyl-tRNA or glutaminyl-tRNA synthetases. The reaction takes place in the presence of glutamine and ATP through an activated phospho-Asp-tRNA(Asn) or phospho-Glu-tRNA(Gln). This Ruegeria sp. (strain TM1040) (Silicibacter sp.) protein is Aspartyl/glutamyl-tRNA(Asn/Gln) amidotransferase subunit B.